The following is a 311-amino-acid chain: Urease accessory protein UreD (311 aa).

It belongs to the UreD family. As to quaternary structure, ureD, UreF and UreG form a complex that acts as a GTP-hydrolysis-dependent molecular chaperone, activating the urease apoprotein by helping to assemble the nickel containing metallocenter of UreC. The UreE protein probably delivers the nickel.

Its subcellular location is the cytoplasm. In terms of biological role, required for maturation of urease via the functional incorporation of the urease nickel metallocenter. The chain is Urease accessory protein UreD from Parasynechococcus marenigrum (strain WH8102).